We begin with the raw amino-acid sequence, 72 residues long: Antimicrobial peptide MeuNaTxbeta-4 (72 aa).

Residues 1 to 5 (LIGVK) form the signal peptide. The 63-residue stretch at 7 to 69 (EHGYLLDKYT…LWHYETNKCN (63 aa)) folds into the LCN-type CS-alpha/beta domain. 4 disulfides stabilise this stretch: Cys18–Cys68, Cys22–Cys43, Cys29–Cys50, and Cys33–Cys52.

In terms of tissue distribution, expressed by the venom gland.

It is found in the secreted. Antimicrobial peptide with weak activity against both Gram-positive and -negative bacteria. Its antibiotic activity is potentiated by other antibacterial peptides such as Meucin-49. The polypeptide is Antimicrobial peptide MeuNaTxbeta-4 (Mesobuthus eupeus (Lesser Asian scorpion)).